The primary structure comprises 139 residues: Ribonuclease VapC36 (139 aa).

The PINc domain occupies 1 to 127 (MIVDTSAVVA…GNDFPQTDLE (127 aa)). Mg(2+) is bound by residues Asp4 and Asp100.

The protein belongs to the PINc/VapC protein family. Mg(2+) serves as cofactor.

Its function is as follows. Toxic component of a type II toxin-antitoxin (TA) system. An RNase. Its cognate antitoxin is VapB36. This is Ribonuclease VapC36 from Mycobacterium tuberculosis (strain ATCC 25618 / H37Rv).